Consider the following 229-residue polypeptide: Cytochrome c oxidase subunit 2 (229 aa).

Topologically, residues methionine 1–histidine 26 are mitochondrial intermembrane. The helical transmembrane segment at alanine 27–asparagine 48 threads the bilayer. Residues serine 49 to glutamate 62 are Mitochondrial matrix-facing. A helical membrane pass occupies residues methionine 63–arginine 82. The Mitochondrial intermembrane segment spans residues leucine 83–serine 229. Cu cation contacts are provided by histidine 161, cysteine 196, glutamate 198, cysteine 200, histidine 204, and methionine 207. Residue glutamate 198 coordinates Mg(2+).

It belongs to the cytochrome c oxidase subunit 2 family. In terms of assembly, component of the cytochrome c oxidase (complex IV, CIV), a multisubunit enzyme composed of a catalytic core of 3 subunits and several supernumerary subunits. The complex exists as a monomer or a dimer and forms supercomplexes (SCs) in the inner mitochondrial membrane with ubiquinol-cytochrome c oxidoreductase (cytochrome b-c1 complex, complex III, CIII). It depends on Cu cation as a cofactor.

Its subcellular location is the mitochondrion inner membrane. It catalyses the reaction 4 Fe(II)-[cytochrome c] + O2 + 8 H(+)(in) = 4 Fe(III)-[cytochrome c] + 2 H2O + 4 H(+)(out). In terms of biological role, component of the cytochrome c oxidase, the last enzyme in the mitochondrial electron transport chain which drives oxidative phosphorylation. The respiratory chain contains 3 multisubunit complexes succinate dehydrogenase (complex II, CII), ubiquinol-cytochrome c oxidoreductase (cytochrome b-c1 complex, complex III, CIII) and cytochrome c oxidase (complex IV, CIV), that cooperate to transfer electrons derived from NADH and succinate to molecular oxygen, creating an electrochemical gradient over the inner membrane that drives transmembrane transport and the ATP synthase. Cytochrome c oxidase is the component of the respiratory chain that catalyzes the reduction of oxygen to water. Electrons originating from reduced cytochrome c in the intermembrane space (IMS) are transferred via the dinuclear copper A center (CU(A)) of subunit 2 and heme A of subunit 1 to the active site in subunit 1, a binuclear center (BNC) formed by heme A3 and copper B (CU(B)). The BNC reduces molecular oxygen to 2 water molecules using 4 electrons from cytochrome c in the IMS and 4 protons from the mitochondrial matrix. This Drosophila ambigua (Fruit fly) protein is Cytochrome c oxidase subunit 2 (mt:CoII).